A 909-amino-acid chain; its full sequence is Protein translocase subunit SecA (909 aa).

ATP is bound by residues Gln-85, 103 to 107, and Asp-512; that span reads GEGKT. The disordered stretch occupies residues 866–899; sequence HETSATGGEEEINKPVVKGKKIGRNDPCPCGSGK. Residues Cys-893, Cys-895, Cys-904, and Cys-905 each contribute to the Zn(2+) site.

Belongs to the SecA family. In terms of assembly, monomer and homodimer. Part of the essential Sec protein translocation apparatus which comprises SecA, SecYEG and auxiliary proteins SecDF. Other proteins may also be involved. Requires Zn(2+) as cofactor.

The protein localises to the cell membrane. Its subcellular location is the cytoplasm. It carries out the reaction ATP + H2O + cellular proteinSide 1 = ADP + phosphate + cellular proteinSide 2.. Part of the Sec protein translocase complex. Interacts with the SecYEG preprotein conducting channel. Has a central role in coupling the hydrolysis of ATP to the transfer of proteins into and across the cell membrane, serving as an ATP-driven molecular motor driving the stepwise translocation of polypeptide chains across the membrane. The sequence is that of Protein translocase subunit SecA from Finegoldia magna (strain ATCC 29328 / DSM 20472 / WAL 2508) (Peptostreptococcus magnus).